A 241-amino-acid polypeptide reads, in one-letter code: Pyridoxine 5'-phosphate synthase (241 aa).

N7 lines the 3-amino-2-oxopropyl phosphate pocket. 9–10 (DH) is a 1-deoxy-D-xylulose 5-phosphate binding site. Residue R18 coordinates 3-amino-2-oxopropyl phosphate. H43 serves as the catalytic Proton acceptor. 1-deoxy-D-xylulose 5-phosphate-binding residues include R45 and H50. E70 serves as the catalytic Proton acceptor. T100 serves as a coordination point for 1-deoxy-D-xylulose 5-phosphate. The active-site Proton donor is H191. 3-amino-2-oxopropyl phosphate-binding positions include G192 and 213–214 (GH).

It belongs to the PNP synthase family. As to quaternary structure, homooctamer; tetramer of dimers.

It localises to the cytoplasm. The enzyme catalyses 3-amino-2-oxopropyl phosphate + 1-deoxy-D-xylulose 5-phosphate = pyridoxine 5'-phosphate + phosphate + 2 H2O + H(+). It functions in the pathway cofactor biosynthesis; pyridoxine 5'-phosphate biosynthesis; pyridoxine 5'-phosphate from D-erythrose 4-phosphate: step 5/5. Its function is as follows. Catalyzes the complicated ring closure reaction between the two acyclic compounds 1-deoxy-D-xylulose-5-phosphate (DXP) and 3-amino-2-oxopropyl phosphate (1-amino-acetone-3-phosphate or AAP) to form pyridoxine 5'-phosphate (PNP) and inorganic phosphate. This chain is Pyridoxine 5'-phosphate synthase, found in Maridesulfovibrio salexigens (strain ATCC 14822 / DSM 2638 / NCIMB 8403 / VKM B-1763) (Desulfovibrio salexigens).